A 157-amino-acid chain; its full sequence is 2-C-methyl-D-erythritol 2,4-cyclodiphosphate synthase (157 aa).

A divalent metal cation-binding residues include aspartate 8 and histidine 10. Residues 8-10 (DIH) and 34-35 (HS) contribute to the 4-CDP-2-C-methyl-D-erythritol 2-phosphate site. Residue histidine 42 participates in a divalent metal cation binding. 4-CDP-2-C-methyl-D-erythritol 2-phosphate is bound by residues 56–58 (DIG) and 132–135 (TTNE).

The protein belongs to the IspF family. As to quaternary structure, homotrimer. The cofactor is a divalent metal cation.

The enzyme catalyses 4-CDP-2-C-methyl-D-erythritol 2-phosphate = 2-C-methyl-D-erythritol 2,4-cyclic diphosphate + CMP. It functions in the pathway isoprenoid biosynthesis; isopentenyl diphosphate biosynthesis via DXP pathway; isopentenyl diphosphate from 1-deoxy-D-xylulose 5-phosphate: step 4/6. Functionally, involved in the biosynthesis of isopentenyl diphosphate (IPP) and dimethylallyl diphosphate (DMAPP), two major building blocks of isoprenoid compounds. Catalyzes the conversion of 4-diphosphocytidyl-2-C-methyl-D-erythritol 2-phosphate (CDP-ME2P) to 2-C-methyl-D-erythritol 2,4-cyclodiphosphate (ME-CPP) with a corresponding release of cytidine 5-monophosphate (CMP). The protein is 2-C-methyl-D-erythritol 2,4-cyclodiphosphate synthase of Synechococcus sp. (strain JA-3-3Ab) (Cyanobacteria bacterium Yellowstone A-Prime).